The sequence spans 458 residues: Phosphoglucosamine mutase (458 aa).

Serine 106 (phosphoserine intermediate) is an active-site residue. Mg(2+) is bound by residues serine 106, aspartate 247, aspartate 249, and aspartate 251. Residue serine 106 is modified to Phosphoserine.

This sequence belongs to the phosphohexose mutase family. It depends on Mg(2+) as a cofactor. Activated by phosphorylation.

The enzyme catalyses alpha-D-glucosamine 1-phosphate = D-glucosamine 6-phosphate. Its function is as follows. Catalyzes the conversion of glucosamine-6-phosphate to glucosamine-1-phosphate. This is Phosphoglucosamine mutase from Chlamydia trachomatis serovar D (strain ATCC VR-885 / DSM 19411 / UW-3/Cx).